A 103-amino-acid chain; its full sequence is Small ubiquitin-related modifier 3 (103 aa).

Glycyl lysine isopeptide (Lys-Gly) (interchain with G-Cter in SUMO2) cross-links involve residues K5 and K7. K11 is covalently cross-linked (Glycyl lysine isopeptide (Lys-Gly) (interchain with G-Cter in SUMO); alternate). A Glycyl lysine isopeptide (Lys-Gly) (interchain with G-Cter in SUMO2); alternate cross-link involves residue K11. The region spanning D15 to G92 is the Ubiquitin-like domain. G92 is covalently cross-linked (Glycyl lysine isopeptide (Gly-Lys) (interchain with K-? in acceptor proteins)). Residues V93–F103 constitute a propeptide that is removed on maturation.

The protein belongs to the ubiquitin family. SUMO subfamily. In terms of assembly, covalently attached to a number of proteins. Interacts with BMAL1. Interacts with USP25 (via ts SIM domain); the interaction sumoylates USP25 and inhibits its ubiquitin hydrolyzing activity. Interacts with SAE2 and UBE2I. In terms of processing, polymeric chains can be formed through Lys-11 cross-linking. Post-translationally, cleavage of precursor form by SENP1, SENP2 or SENP5 is necessary for function. Expressed predominantly in liver.

Its subcellular location is the cytoplasm. It is found in the nucleus. It localises to the PML body. Functionally, ubiquitin-like protein which can be covalently attached to target lysines either as a monomer or as a lysine-linked polymer. Does not seem to be involved in protein degradation and may function as an antagonist of ubiquitin in the degradation process. Plays a role in a number of cellular processes such as nuclear transport, DNA replication and repair, mitosis and signal transduction. Covalent attachment to its substrates requires prior activation by the E1 complex SAE1-SAE2 and linkage to the E2 enzyme UBE2I, and can be promoted by an E3 ligase such as PIAS1-4, RANBP2 or CBX4. Plays a role in the regulation of sumoylation status of SETX. The protein is Small ubiquitin-related modifier 3 of Homo sapiens (Human).